Here is a 160-residue protein sequence, read N- to C-terminus: Transcription antitermination protein NusB (160 aa).

It belongs to the NusB family.

Involved in transcription antitermination. Required for transcription of ribosomal RNA (rRNA) genes. Binds specifically to the boxA antiterminator sequence of the ribosomal RNA (rrn) operons. This chain is Transcription antitermination protein NusB, found in Salinibacter ruber (strain DSM 13855 / M31).